The chain runs to 724 residues: Probable ATP-dependent RNA helicase DDX4 (724 aa).

Over residues 1–11 the composition is skewed to acidic residues; sequence MSGQEDWESEI. Disordered regions lie at residues 1–25 and 37–241; these read MSGQ…SNSE and SSNN…QGPR. The span at 108–130 shows a compositional bias: basic and acidic residues; it reads SNGKQESGDFTNDDNRTIDDNRR. Polar residues predominate over residues 168–182; the sequence is EQSGFTSNDGFNNET. The Q motif signature appears at 286–314; it reads LTFEEANLCDSLAKNVCKSGYVKLTPIQK. Positions 317 to 500 constitute a Helicase ATP-binding domain; sequence IPIIVAGRDL…REILKPDYLF (184 aa). 330–337 contributes to the ATP binding site; sequence AQTGSGKT. The short motif at 444–447 is the DEAD box element; that stretch reads DEAD. One can recognise a Helicase C-terminal domain in the interval 512 to 675; it reads DVEQMVIEVD…EVPAWLEEVA (164 aa). Positions 683–692 are enriched in polar residues; that stretch reads AYNPRSNKFA. The disordered stretch occupies residues 683–724; that stretch reads AYNPRSNKFASTDDRKRGDSRGDYSTSGFSPSAAQAEEEDWG. Residues 693-704 are compositionally biased toward basic and acidic residues; sequence STDDRKRGDSRG. Over residues 705–715 the composition is skewed to polar residues; the sequence is DYSTSGFSPSA.

This sequence belongs to the DEAD box helicase family. DDX4/VASA subfamily.

It is found in the cytoplasm. It catalyses the reaction ATP + H2O = ADP + phosphate + H(+). In terms of biological role, probable ATP-dependent RNA helicase required during spermatogenesis to repress transposable elements and preventing their mobilization, which is essential for the germline integrity. Acts via the piRNA metabolic process, which mediates the repression of transposable elements during meiosis by forming complexes composed of piRNAs and Piwi proteins and governs the methylation and subsequent repression of transposons. Involved in the secondary piRNAs metabolic process, the production of piRNAs in fetal male germ cells through a ping-pong amplification cycle. This is Probable ATP-dependent RNA helicase DDX4 from Pelophylax lessonae (Pool frog).